The following is a 180-amino-acid chain: MFEATTILGYRGEFNNKKFALIGGDGQVTLGNCVVKANATKIRSLYHNQVLSGFAGSTADAFSLFDMFERILESKKGDLFKSVVDFSKEWRKDKYLRRLEAMMIVLNLDHIFILSGTGDVLEAEDNKIAAIGSGGNYALSAARALDCFAHLEPKKLVEESLKIAGDLCIYTNTNIKILEL.

The active site involves Thr-5. Na(+) is bound by residues Gly-165, Cys-168, and Thr-171.

The protein belongs to the peptidase T1B family. HslV subfamily. In terms of assembly, a double ring-shaped homohexamer of HslV is capped on each side by a ring-shaped HslU homohexamer. The assembly of the HslU/HslV complex is dependent on binding of ATP.

Its subcellular location is the cytoplasm. The catalysed reaction is ATP-dependent cleavage of peptide bonds with broad specificity.. With respect to regulation, allosterically activated by HslU binding. Its function is as follows. Protease subunit of a proteasome-like degradation complex believed to be a general protein degrading machinery. The polypeptide is ATP-dependent protease subunit HslV (Helicobacter acinonychis (strain Sheeba)).